Here is a 110-residue protein sequence, read N- to C-terminus: Large ribosomal subunit protein P2 (110 aa).

The tract at residues 63–110 (ASVPSGGGVAAAAPAAGGGGADPAEAKEEKKEEPEEESDDDMGFGLFD) is disordered. The span at 86–95 (AEAKEEKKEE) shows a compositional bias: basic and acidic residues.

Belongs to the eukaryotic ribosomal protein P1/P2 family. P1 and P2 exist as dimers at the large ribosomal subunit. Post-translationally, phosphorylated.

In terms of biological role, plays an important role in the elongation step of protein synthesis. This is Large ribosomal subunit protein P2 from Cryptochiton stelleri (Giant gumboot chiton).